The chain runs to 632 residues: Sodium- and chloride-dependent GABA transporter 3 (632 aa).

The segment at 1 to 41 (MTAEKALPLGNGKAAEEARESEAPGGGCSSGGAAPARHPRV) is disordered. Residues 1–58 (MTAEKALPLGNGKAAEEARESEAPGGGCSSGGAAPARHPRVKRDKAVHERGHWNNKVE) are Cytoplasmic-facing. Serine 21 is modified (phosphoserine). A run of 3 helical transmembrane segments spans residues 59 to 79 (FVLSVAGEIIGLGNVWRFPYL), 87 to 106 (AFLIPYVVFFICCGIPVFFL), and 131 to 151 (GIGYATQVIEAHLNVYYIIIL). Residues 152-225 (AWAIFYLSNC…DGIEHIGNLR (74 aa)) are Extracellular-facing. Residues asparagine 187, asparagine 190, and asparagine 198 are each glycosylated (N-linked (GlcNAc...) asparagine). A run of 9 helical transmembrane segments spans residues 226–244 (WELALCLLAAWTICYFCIW), 253–270 (VVYVTATFPYIMLLILLI), 306–323 (IFFSYAICLGCLTALGSY), 335–356 (IMLCCLNSGTSFVAGFAIFSVL), 389–408 (MPLSPLWATLFFMMLIFLGL), 438–456 (LLILALSVISYFLGLVMLT), 473–493 (GMCLLFVAIFECICIGWVYGS), 514–533 (WCWMIMTPGICAGIFIFFLI), and 553–571 (IGWLMALSSMLCIPLWICI). Topologically, residues 572–632 (TVWKTEGTLP…AAITEKETHF (61 aa)) are cytoplasmic.

This sequence belongs to the sodium:neurotransmitter symporter (SNF) (TC 2.A.22) family. SLC6A11 subfamily. Widespread distribution in the brain.

The protein resides in the cell membrane. It carries out the reaction 4-aminobutanoate(out) + chloride(out) + 2 Na(+)(out) = 4-aminobutanoate(in) + chloride(in) + 2 Na(+)(in). It catalyses the reaction taurine(out) + chloride(out) + 2 Na(+)(out) = taurine(in) + chloride(in) + 2 Na(+)(in). The enzyme catalyses beta-alanine(out) + chloride(out) + 2 Na(+)(out) = beta-alanine(in) + chloride(in) + 2 Na(+)(in). The catalysed reaction is hypotaurine(out) + chloride(out) + 2 Na(+)(out) = hypotaurine(in) + chloride(in) + 2 Na(+)(in). With respect to regulation, GABA transport is inhibited by SNAP-5114. Functionally, mediates sodium- and chloride-dependent transport of gamma-aminobutyric acid (GABA). Can also mediate transport of beta-alanine and to a lower extent that of taurine and hypotaurine. In Homo sapiens (Human), this protein is Sodium- and chloride-dependent GABA transporter 3 (SLC6A11).